The primary structure comprises 344 residues: Nicotinate-nucleotide--dimethylbenzimidazole phosphoribosyltransferase (344 aa).

The active-site Proton acceptor is Glu310.

Belongs to the CobT family.

The enzyme catalyses 5,6-dimethylbenzimidazole + nicotinate beta-D-ribonucleotide = alpha-ribazole 5'-phosphate + nicotinate + H(+). It functions in the pathway nucleoside biosynthesis; alpha-ribazole biosynthesis; alpha-ribazole from 5,6-dimethylbenzimidazole: step 1/2. In terms of biological role, catalyzes the synthesis of alpha-ribazole-5'-phosphate from nicotinate mononucleotide (NAMN) and 5,6-dimethylbenzimidazole (DMB). This chain is Nicotinate-nucleotide--dimethylbenzimidazole phosphoribosyltransferase, found in Chromobacterium violaceum (strain ATCC 12472 / DSM 30191 / JCM 1249 / CCUG 213 / NBRC 12614 / NCIMB 9131 / NCTC 9757 / MK).